We begin with the raw amino-acid sequence, 425 residues long: Serine--tRNA ligase (425 aa).

232-234 (TSE) is an L-serine binding site. ATP-binding positions include 263 to 265 (RRE) and valine 279. Glutamate 286 contributes to the L-serine binding site. 350–353 (EVVS) contacts ATP. Threonine 387 provides a ligand contact to L-serine.

This sequence belongs to the class-II aminoacyl-tRNA synthetase family. Type-1 seryl-tRNA synthetase subfamily. Homodimer. The tRNA molecule binds across the dimer.

It is found in the cytoplasm. It carries out the reaction tRNA(Ser) + L-serine + ATP = L-seryl-tRNA(Ser) + AMP + diphosphate + H(+). The enzyme catalyses tRNA(Sec) + L-serine + ATP = L-seryl-tRNA(Sec) + AMP + diphosphate + H(+). It participates in aminoacyl-tRNA biosynthesis; selenocysteinyl-tRNA(Sec) biosynthesis; L-seryl-tRNA(Sec) from L-serine and tRNA(Sec): step 1/1. Catalyzes the attachment of serine to tRNA(Ser). Is also able to aminoacylate tRNA(Sec) with serine, to form the misacylated tRNA L-seryl-tRNA(Sec), which will be further converted into selenocysteinyl-tRNA(Sec). This is Serine--tRNA ligase from Methanospirillum hungatei JF-1 (strain ATCC 27890 / DSM 864 / NBRC 100397 / JF-1).